Consider the following 304-residue polypeptide: Acetylglutamate kinase (304 aa).

Residues 77–78 (GG), Arg-99, and Asn-193 each bind substrate.

The protein belongs to the acetylglutamate kinase family. ArgB subfamily.

Its subcellular location is the cytoplasm. The catalysed reaction is N-acetyl-L-glutamate + ATP = N-acetyl-L-glutamyl 5-phosphate + ADP. It functions in the pathway amino-acid biosynthesis; L-arginine biosynthesis; N(2)-acetyl-L-ornithine from L-glutamate: step 2/4. In terms of biological role, catalyzes the ATP-dependent phosphorylation of N-acetyl-L-glutamate. In Chlorobium limicola (strain DSM 245 / NBRC 103803 / 6330), this protein is Acetylglutamate kinase.